A 204-amino-acid polypeptide reads, in one-letter code: Thiamine-phosphate synthase (204 aa).

4-amino-2-methyl-5-(diphosphooxymethyl)pyrimidine-binding positions include 35–39 (QVREK) and Asn67. Positions 68 and 87 each coordinate Mg(2+). Residue Ser106 participates in 4-amino-2-methyl-5-(diphosphooxymethyl)pyrimidine binding. Residue 132 to 134 (TPT) participates in 2-[(2R,5Z)-2-carboxy-4-methylthiazol-5(2H)-ylidene]ethyl phosphate binding. Lys135 is a 4-amino-2-methyl-5-(diphosphooxymethyl)pyrimidine binding site. 2-[(2R,5Z)-2-carboxy-4-methylthiazol-5(2H)-ylidene]ethyl phosphate is bound by residues Gly163 and 183–184 (VS).

This sequence belongs to the thiamine-phosphate synthase family. Mg(2+) serves as cofactor.

The enzyme catalyses 2-[(2R,5Z)-2-carboxy-4-methylthiazol-5(2H)-ylidene]ethyl phosphate + 4-amino-2-methyl-5-(diphosphooxymethyl)pyrimidine + 2 H(+) = thiamine phosphate + CO2 + diphosphate. It carries out the reaction 2-(2-carboxy-4-methylthiazol-5-yl)ethyl phosphate + 4-amino-2-methyl-5-(diphosphooxymethyl)pyrimidine + 2 H(+) = thiamine phosphate + CO2 + diphosphate. It catalyses the reaction 4-methyl-5-(2-phosphooxyethyl)-thiazole + 4-amino-2-methyl-5-(diphosphooxymethyl)pyrimidine + H(+) = thiamine phosphate + diphosphate. The protein operates within cofactor biosynthesis; thiamine diphosphate biosynthesis; thiamine phosphate from 4-amino-2-methyl-5-diphosphomethylpyrimidine and 4-methyl-5-(2-phosphoethyl)-thiazole: step 1/1. Functionally, condenses 4-methyl-5-(beta-hydroxyethyl)thiazole monophosphate (THZ-P) and 2-methyl-4-amino-5-hydroxymethyl pyrimidine pyrophosphate (HMP-PP) to form thiamine monophosphate (TMP). The chain is Thiamine-phosphate synthase from Vibrio campbellii (strain ATCC BAA-1116).